The primary structure comprises 471 residues: MYPLNANSYTLLRKLGSGSFGVVWKARENVSGDIIAIKQIDLETGIDDITDIEQEVFMLSNCNSSNVIQYYGCFVDGYTLWILMEHMDGGSVSGLLKMGRLNEQVISIILREVLYGLNYLHGQNKIHRDIKAANILLSSSTGNVKLADFGVAAQLSNAASRRHTFVGTPFWMAPEVIQQTSYGLAADIWSLGITAIEMANGIPPRATMHPMRVIFEIPQSEPPKLDDHFSPTFRDFVSCCLDLNPNMRWSAKELLQHPFIKSAGTVKDIIPLLVQKENKLFDDSDQSVLEETINNTLKPFEEPIAEGNADIEDWTFETVKKSDSTVLGNTSIPKNSIISSQNKEELPSSIKYLEKTIMSDQATPHPFSKSLSEKGSSYHKSLTSDFAMKHYIKSTIRSMLLNDKLSATQRSSLESFYTSFISLDKNLSSKFVNQITPDNRLHHKKQKRSPISQLLFSRWLEETEKRRSLNG.

A Protein kinase domain is found at 9 to 260 (YTLLRKLGSG…AKELLQHPFI (252 aa)). ATP-binding positions include 15–23 (LGSGSFGVV) and Lys-38. The active-site Proton acceptor is the Asp-129.

This sequence belongs to the protein kinase superfamily. STE Ser/Thr protein kinase family. STE20 subfamily. Interacts with cdc14.

Its subcellular location is the cytoplasm. It is found in the cytoskeleton. It localises to the microtubule organizing center. The protein resides in the spindle pole body. The enzyme catalyses L-seryl-[protein] + ATP = O-phospho-L-seryl-[protein] + ADP + H(+). The catalysed reaction is L-threonyl-[protein] + ATP = O-phospho-L-threonyl-[protein] + ADP + H(+). In terms of biological role, has a role in the septation initiation network (SIN) required for cytokinesis. This chain is Serine/threonine-protein kinase sid1 (sid1), found in Schizosaccharomyces pombe (strain 972 / ATCC 24843) (Fission yeast).